Here is a 391-residue protein sequence, read N- to C-terminus: tRNA(Met) cytidine acetate ligase (391 aa).

ATP is bound by residues 7 to 20 (IAEY…HIYQ), G101, N153, and R178.

The protein belongs to the TmcAL family.

The protein localises to the cytoplasm. The enzyme catalyses cytidine(34) in elongator tRNA(Met) + acetate + ATP = N(4)-acetylcytidine(34) in elongator tRNA(Met) + AMP + diphosphate. Catalyzes the formation of N(4)-acetylcytidine (ac(4)C) at the wobble position of elongator tRNA(Met), using acetate and ATP as substrates. First activates an acetate ion to form acetyladenylate (Ac-AMP) and then transfers the acetyl group to tRNA to form ac(4)C34. This Latilactobacillus sakei subsp. sakei (strain 23K) (Lactobacillus sakei subsp. sakei) protein is tRNA(Met) cytidine acetate ligase.